A 299-amino-acid polypeptide reads, in one-letter code: Probable lipid kinase YegS (299 aa).

The 132-residue stretch at 2–133 (AEFPASLLIL…IDMAQVNKQT (132 aa)) folds into the DAGKc domain. ATP is bound by residues Thr40, 66 to 72 (GDGTINE), and Thr95. Residues Leu215, Asp218, and Leu220 each coordinate Mg(2+). Glu271 acts as the Proton acceptor in catalysis.

Belongs to the diacylglycerol/lipid kinase family. YegS lipid kinase subfamily. Mg(2+) is required as a cofactor. Ca(2+) serves as cofactor.

The protein resides in the cytoplasm. In terms of biological role, probably phosphorylates lipids; the in vivo substrate is unknown. This Escherichia coli (strain K12 / MC4100 / BW2952) protein is Probable lipid kinase YegS.